Reading from the N-terminus, the 20-residue chain is Pregnancy-associated glycoprotein 73B (20 aa).

Belongs to the peptidase A1 family. In terms of processing, N-glycosylated. Expressed in chorionic epithelium (trophectoderm).

Its subcellular location is the secreted. It localises to the extracellular space. This is Pregnancy-associated glycoprotein 73B from Bubalus bubalis (Domestic water buffalo).